A 1369-amino-acid polypeptide reads, in one-letter code: ATP-dependent RNA helicase DHX29 (1369 aa).

Disordered stretches follow at residues 27–75 (SAEA…TNDS) and 176–226 (SQEF…KNME). 3 positions are modified to phosphoserine: Ser-71, Ser-192, and Ser-200. Over residues 189–201 (KFQSPQIQATISP) the composition is skewed to polar residues. Residues 208–226 (KTYEEDPKSKPKKEEKNME) show a composition bias toward basic and acidic residues. Coiled-coil stretches lie at residues 222 to 256 (EKNM…EEEE), 283 to 310 (LEKN…LEDH), and 492 to 519 (IAKL…NSED). Positions 502-526 (QQQQQQQHSENKRENSEDPEESWEN) are disordered. In terms of domain architecture, Helicase ATP-binding spans 582–755 (VETLKRHRVV…FTHCPILRIS (174 aa)). 595–602 (GETGSGKS) contacts ATP. A DEAH box motif is present at residues 702-705 (DEVH). The Helicase C-terminal domain maps to 849–1026 (LILELLAYLD…ELCLHIMKCN (178 aa)).

It belongs to the DEAD box helicase family. DEAH subfamily. Part of the 43S pre-initiation complex (PIC) that contains at least Met-tRNA, EIF1, EIF1A (EIF1AX or EIF1AY), EIF2S1, EIF2S2, EIF2S3, EIF3A, EIF3B, EIF3C, EIF3D, EIF3E, EIF3F, EIF3G, EIF3H, EIF3I, EIF3J, EIF3K, EIF3L, EIF3M, DHX29 and the 40S ribosomal subunit.

It localises to the cytoplasm. The catalysed reaction is ATP + H2O = ADP + phosphate + H(+). Functionally, ATP-binding RNA helicase involved in translation initiation. Part of the 43S pre-initiation complex that is required for efficient initiation on mRNAs of higher eukaryotes with structured 5'-UTRs by promoting efficient NTPase-dependent 48S complex formation. Specifically binds to the 40S ribosome near the mRNA entrance. Does not possess a processive helicase activity. The sequence is that of ATP-dependent RNA helicase DHX29 from Homo sapiens (Human).